Consider the following 400-residue polypeptide: Serine/threonine transporter SstT (400 aa).

Transmembrane regions (helical) follow at residues 14-34, 48-68, 76-96, 136-156, 177-197, 211-231, 285-305, 311-331, and 349-371; these read IIIA…VTPY, SVAP…FQVG, VLLL…IASL, AISE…GLAM, IIHK…AVTF, LLVV…PILV, IPLG…VLTL, LGIH…TISA, and CSLF…IISV.

Belongs to the dicarboxylate/amino acid:cation symporter (DAACS) (TC 2.A.23) family.

It is found in the cell inner membrane. It catalyses the reaction L-serine(in) + Na(+)(in) = L-serine(out) + Na(+)(out). The enzyme catalyses L-threonine(in) + Na(+)(in) = L-threonine(out) + Na(+)(out). Its function is as follows. Involved in the import of serine and threonine into the cell, with the concomitant import of sodium (symport system). This is Serine/threonine transporter SstT from Acinetobacter baumannii (strain AB307-0294).